The sequence spans 89 residues: Large ribosomal subunit protein eL43 (89 aa).

Zn(2+) contacts are provided by Cys-38, Cys-41, Cys-56, and Cys-59. The C4-type zinc-finger motif lies at 38-59 (CPVCHKRAVKRVGTGIWRCTKC).

This sequence belongs to the eukaryotic ribosomal protein eL43 family. Putative zinc-binding subfamily. As to quaternary structure, part of the 50S ribosomal subunit. Zn(2+) is required as a cofactor.

Its function is as follows. Binds to the 23S rRNA. The sequence is that of Large ribosomal subunit protein eL43 from Methanopyrus kandleri (strain AV19 / DSM 6324 / JCM 9639 / NBRC 100938).